We begin with the raw amino-acid sequence, 495 residues long: Cysteine--tRNA ligase (495 aa).

Residue cysteine 29 coordinates Zn(2+). The short motif at 31-41 (VTVYDDSHVGH) is the 'HIGH' region element. 3 residues coordinate Zn(2+): cysteine 209, histidine 234, and glutamate 238. The short motif at 266–270 (KMSKS) is the 'KMSKS' region element. Lysine 269 serves as a coordination point for ATP.

It belongs to the class-I aminoacyl-tRNA synthetase family. As to quaternary structure, monomer. It depends on Zn(2+) as a cofactor.

Its subcellular location is the cytoplasm. It catalyses the reaction tRNA(Cys) + L-cysteine + ATP = L-cysteinyl-tRNA(Cys) + AMP + diphosphate. In Aquifex aeolicus (strain VF5), this protein is Cysteine--tRNA ligase (cysS).